Reading from the N-terminus, the 202-residue chain is Recombination protein RecR (202 aa).

The C4-type zinc-finger motif lies at 57 to 72; the sequence is CRDCRTFTEDDICAVC. Residues 81 to 176 enclose the Toprim domain; the sequence is GQICVVESPA…PATRIAHGVP (96 aa).

The protein belongs to the RecR family.

May play a role in DNA repair. It seems to be involved in an RecBC-independent recombinational process of DNA repair. It may act with RecF and RecO. The sequence is that of Recombination protein RecR from Photobacterium profundum (strain SS9).